Here is a 492-residue protein sequence, read N- to C-terminus: Glutamyl-tRNA(Gln) amidotransferase subunit A (492 aa).

Residues Lys79 and Ser154 each act as charge relay system in the active site. Ser178 serves as the catalytic Acyl-ester intermediate.

It belongs to the amidase family. GatA subfamily. As to quaternary structure, heterotrimer of A, B and C subunits.

The enzyme catalyses L-glutamyl-tRNA(Gln) + L-glutamine + ATP + H2O = L-glutaminyl-tRNA(Gln) + L-glutamate + ADP + phosphate + H(+). Its function is as follows. Allows the formation of correctly charged Gln-tRNA(Gln) through the transamidation of misacylated Glu-tRNA(Gln) in organisms which lack glutaminyl-tRNA synthetase. The reaction takes place in the presence of glutamine and ATP through an activated gamma-phospho-Glu-tRNA(Gln). In Acinetobacter baumannii (strain ATCC 17978 / DSM 105126 / CIP 53.77 / LMG 1025 / NCDC KC755 / 5377), this protein is Glutamyl-tRNA(Gln) amidotransferase subunit A.